Consider the following 419-residue polypeptide: Tyrosine--tRNA ligase (419 aa).

Position 42 (Y42) interacts with L-tyrosine. Residues 47–56 (ATAPSLHVGS) carry the 'HIGH' region motif. Residues Y179 and Q183 each coordinate L-tyrosine. Residues 239 to 243 (KMGKT) carry the 'KMSKS' region motif. K242 lines the ATP pocket. The 66-residue stretch at 353 to 418 (IVLANLFADA…GKKKIVLVKP (66 aa)) folds into the S4 RNA-binding domain.

The protein belongs to the class-I aminoacyl-tRNA synthetase family. TyrS type 1 subfamily. Homodimer.

It is found in the cytoplasm. It catalyses the reaction tRNA(Tyr) + L-tyrosine + ATP = L-tyrosyl-tRNA(Tyr) + AMP + diphosphate + H(+). Functionally, catalyzes the attachment of tyrosine to tRNA(Tyr) in a two-step reaction: tyrosine is first activated by ATP to form Tyr-AMP and then transferred to the acceptor end of tRNA(Tyr). In Caulobacter sp. (strain K31), this protein is Tyrosine--tRNA ligase.